A 180-amino-acid chain; its full sequence is NEDD8-conjugating enzyme ubc-12 (180 aa).

The UBC core domain occupies 24 to 180 (VRDKLLAQEL…RVREYISRYC (157 aa)). The active-site Glycyl thioester intermediate is the C112.

Belongs to the ubiquitin-conjugating enzyme family. UBC12 subfamily.

Its subcellular location is the cytoplasm. It carries out the reaction [E1 NEDD8-activating enzyme]-S-[NEDD8 protein]-yl-L-cysteine + [E2 NEDD8-conjugating enzyme]-L-cysteine = [E1 NEDD8-activating enzyme]-L-cysteine + [E2 NEDD8-conjugating enzyme]-S-[NEDD8-protein]-yl-L-cysteine.. The protein operates within protein modification; protein neddylation. In terms of biological role, accepts the ubiquitin-like protein NEDD8 from the uba-3-ula-1 E1 complex and catalyzes its covalent attachment to other proteins. Plays a role in male tail tip morphogenesis. This is NEDD8-conjugating enzyme ubc-12 from Caenorhabditis elegans.